A 331-amino-acid chain; its full sequence is Nodulation protein D 2 (331 aa).

The HTH lysR-type domain maps to 6–63; it reads LDLNLLVALDALMTERSLTAAARKINLSQPAMSAAVARLRSYFRDELFAMRGRKLVPT. The segment at residues 23 to 42 is a DNA-binding region (H-T-H motif); it reads LTAAARKINLSQPAMSAAVA.

Belongs to the LysR transcriptional regulatory family.

Its function is as follows. NodD regulates the expression of the nodABCFE genes which encode other nodulation proteins. NodD is also a negative regulator of its own expression. Binds flavonoids as inducers. This chain is Nodulation protein D 2 (nodD2), found in Bradyrhizobium elkanii.